A 788-amino-acid chain; its full sequence is Pre-rRNA-processing protein TSR1 homolog (788 aa).

Residues M1–V40 form a disordered region. Residues G9–R25 are compositionally biased toward basic residues. Positions T26 to V40 are enriched in basic and acidic residues. A Bms1-type G domain is found at A83–K243. The segment at L354–I433 is disordered. Residues D378–P412 are compositionally biased toward acidic residues.

The protein belongs to the TRAFAC class translation factor GTPase superfamily. Bms1-like GTPase family. TSR1 subfamily.

It localises to the nucleus. The protein resides in the nucleolus. Its function is as follows. Required during maturation of the 40S ribosomal subunit in the nucleolus. The chain is Pre-rRNA-processing protein TSR1 homolog from Caenorhabditis briggsae.